We begin with the raw amino-acid sequence, 533 residues long: Probable nucleolar protein 5-1 (533 aa).

The 119-residue stretch at 280–398 folds into the Nop domain; sequence IAPNLTALVG…LEARLRTLEG (119 aa). Residues 402–533 form a disordered region; the sequence is GRLSGSAKGK…EKKKKKKTEV (132 aa). Residues 412 to 423 show a composition bias toward basic and acidic residues; sequence PKIEVYDKDKKK. The segment covering 433–450 has biased composition (polar residues); the sequence is KTYNTAADSLLQTPTVDS. 2 stretches are compositionally biased toward basic and acidic residues: residues 474-489 and 515-524; these read TEEPSKKKSNKKKTEA and MPAKKKEKSE.

This sequence belongs to the NOP5/NOP56 family.

Its subcellular location is the nucleus. The protein resides in the nucleolus. Functionally, required for 60S ribosomal subunit biogenesis. The chain is Probable nucleolar protein 5-1 (NOP5-1) from Arabidopsis thaliana (Mouse-ear cress).